The sequence spans 386 residues: Na(+)/H(+) antiporter NhaA (386 aa).

The next 10 helical transmembrane spans lie at 10-30, 45-65, 84-104, 116-136, 142-162, 169-189, 261-281, 287-307, 323-343, and 358-378; these read EFSIPLLAGVLTALVWANVAP, LSFHFVTNDIFMAFFFAIAAV, LNPLLATAGGVVGPVGVYLAL, GWGIPTATDIAFAWLAARLIF, VIAFLLLLAIADDAIGLVIIA, VLPVAPPWLMLTAAGMLIAFI, IIVDFGLFMFGLANAGVGFSA, WLVFCALLFGKVTGIFVFALL, HLLVAGIIAGIGFTVALFVAG, and GAILSIAVFPVAMAAAKLLGI.

Belongs to the NhaA Na(+)/H(+) (TC 2.A.33) antiporter family.

The protein resides in the cell inner membrane. It catalyses the reaction Na(+)(in) + 2 H(+)(out) = Na(+)(out) + 2 H(+)(in). Na(+)/H(+) antiporter that extrudes sodium in exchange for external protons. The sequence is that of Na(+)/H(+) antiporter NhaA from Geotalea uraniireducens (strain Rf4) (Geobacter uraniireducens).